The chain runs to 1505 residues: MRKYVLFFISGNNDSQIWATTPNTPRVIARGGLERNIHTRTLARMVNEDAPGTSTPAAQSRLQTTASPFHRTHLTQMCRRGDTNASLLRDFTRMIRDTPRNFSKNTQHGNDRDFGDLERDPDVDLLLSKVCLECVYVEPKEGAIPKANKIFISNFLSDMYINLVSVTGEVMKIIPIWKNAETTRKNLLEKGKHEPCVVDCVDAAFVMKSGITVVLGSDFTTAMFGGNERIAPIFIKEMSNQRVGRKFRLFSFAENRIFAVNEMRCIVVEIPETVTCKSATELMRTCFLHLDRDLSRKLLIKWRSVKRDVDTERLDLDRKEMIDVAIFMLDNVGVRVTNVVAQERADSPEGHGGKQMRPRMSDSEVLSMMRQFFEEMTFRPKSEVITEDGYKCHLSVELDPNGEGFVHTQDLLHAFHSQCEDWSINTMMHSILLELIPYAYLLAKVMNYRAFEEYYVQLFKHLLSQIAIEFKIPPEIHEKFVGAIHIPKPCWSLNNVIAHIICERTTPETMESIPKFISKSSVRLLTILAVGRKFIGMGTNIDMDCERWLGKDWKRRIGLSGDILKSFRRIMNGKSSNSAGRASQLIELFEIGSITIDFMVLAVKVLMLKFQTDAFAGAQSIEPKKCIYATADEMISIAHLRWKNDIRMHNVQLMLNSSRPILIATNILRKNEDDNMKELQDRFLTQTSYRTFSQPFGRAFLDFRTAVPSLLTSIYIPRLNVGGMIYPSRVTCDPPTTEIFKLCTEWGNFYNSLASALRIGSSETVRIDNEWIVMVSKNIKSTAVIGGMTLGFGLNGHLAPFNMYHAHQMLSTFDKFHSVALLIGLSASNFTTCDVQIHKILATYLSFLMGPTPLEIKLDFTIQTAAISGLGLLFADSGNMTIAKKLVNEIGRAPNRDEEPVTDRNAYKLSAGFSLGLIMLGKGNGSASTVIPFKQNIPPMSQRLIYMMNGMRRDKCVFLPQVAPPVVNDVPNLPFSNGGMMTSSQVANHVKESEYINIHQSAEPAAIALGMMFMKMNNEFIANALALPGTITELERLKPDSMYSRVLAQCLVMWDSIEPTHDFVKSLIPPVIREYATAALHFGVPIRRDEDGEEVHEAINDAEEKYWAEIVDKGTVSQTFLYAVSAACMAIALKFSSCGGPNEKNIVNTAFRIIEYYTKIVMPDGKSNKDMGSIRMCIYSGAYTRTSCLSMLITAMAILRVGTGDLEVMRYARLLRLCDKPESDWIATGKKHFEQMVAHQALGILMLGEGRYAFKKDDLSIALTIISTFPTIPQSVSDNSHYHQPLRFLWSMAVEPRLLVPFDIAESCVVEVDVTIVMKPKDGNEPIVYKEKAPYLLPPLEDLQSISIGGGNYQLVHISLQSEDQVKVMKDIMTIGQGRVMLKRYGVDSSEMKIKEATTLYDDTPSLMSMFNNEDTAVELDEYEIQCMMEKIDEGINLNSSDEYPNVQIELSCVRDVTERTTMDLAQLQKRSLKLLSESLDLWQDEVNVSNTINGLADAVQDMQI.

This sequence belongs to the APC1 family. As to quaternary structure, the APC/C complex is probably composed of at least 12 subunits: apc-2, apc-10, apc-11, cdc-26, emb-1, emb-27, emb-30, mat-1, mat-2, mat-3, such-1 and gfi-3.

It participates in protein modification; protein ubiquitination. Its function is as follows. Probable component of the anaphase promoting complex/cyclosome (APC/C), a cell cycle-regulated E3 ubiquitin ligase that controls progression through mitosis and the G1 phase of the cell cycle. The APC/C complex acts by mediating ubiquitination and subsequent degradation of target proteins. Developmental role in early embryogenesis and the metaphase to anaphase transition in oocyte and spermatocyte meiosis and mitosis in germ cells. Required for embryonic anterior-posterior axis formation. Plays a role in regulating the abundance of glr-1 receptors in postmitotic neurons, which may in turn control animal locomotion. Involved in regulating GABA neurotransmitter release at neuromuscular junctions in GABA motor neurons. This chain is Anaphase-promoting complex subunit 1, found in Caenorhabditis elegans.